A 491-amino-acid polypeptide reads, in one-letter code: Glutamate--tRNA ligase (491 aa).

The 'HIGH' region motif lies at 12-22 (PSPTGTPHVGL). A disordered region spans residues 111-134 (STPEEVEERHKAAGRDPKLGYDNF). Basic and acidic residues predominate over residues 117–134 (EERHKAAGRDPKLGYDNF). The 'KMSKS' region signature appears at 256 to 260 (KLSKR). Residue lysine 259 participates in ATP binding.

It belongs to the class-I aminoacyl-tRNA synthetase family. Glutamate--tRNA ligase type 1 subfamily. In terms of assembly, monomer.

The protein localises to the cytoplasm. The enzyme catalyses tRNA(Glu) + L-glutamate + ATP = L-glutamyl-tRNA(Glu) + AMP + diphosphate. In terms of biological role, catalyzes the attachment of glutamate to tRNA(Glu) in a two-step reaction: glutamate is first activated by ATP to form Glu-AMP and then transferred to the acceptor end of tRNA(Glu). This is Glutamate--tRNA ligase from Rhodococcus jostii (strain RHA1).